The primary structure comprises 292 residues: NAD kinase (292 aa).

D74 (proton acceptor) is an active-site residue. NAD(+)-binding positions include 74–75 (DG), 147–148 (NE), D177, and 188–193 (TGYSLS).

This sequence belongs to the NAD kinase family. A divalent metal cation is required as a cofactor.

It localises to the cytoplasm. The catalysed reaction is NAD(+) + ATP = ADP + NADP(+) + H(+). Involved in the regulation of the intracellular balance of NAD and NADP, and is a key enzyme in the biosynthesis of NADP. Catalyzes specifically the phosphorylation on 2'-hydroxyl of the adenosine moiety of NAD to yield NADP. In Cytophaga hutchinsonii (strain ATCC 33406 / DSM 1761 / CIP 103989 / NBRC 15051 / NCIMB 9469 / D465), this protein is NAD kinase.